The sequence spans 211 residues: FMN-dependent NADH:quinone oxidoreductase (211 aa).

Residue 17–19 coordinates FMN; sequence SYS.

This sequence belongs to the azoreductase type 1 family. Homodimer. FMN is required as a cofactor.

The catalysed reaction is 2 a quinone + NADH + H(+) = 2 a 1,4-benzosemiquinone + NAD(+). The enzyme catalyses N,N-dimethyl-1,4-phenylenediamine + anthranilate + 2 NAD(+) = 2-(4-dimethylaminophenyl)diazenylbenzoate + 2 NADH + 2 H(+). Functionally, quinone reductase that provides resistance to thiol-specific stress caused by electrophilic quinones. Its function is as follows. Also exhibits azoreductase activity. Catalyzes the reductive cleavage of the azo bond in aromatic azo compounds to the corresponding amines. This Bacillus pumilus (strain SAFR-032) protein is FMN-dependent NADH:quinone oxidoreductase.